The chain runs to 238 residues: Aspartate/glutamate leucyltransferase (238 aa).

Belongs to the R-transferase family. Bpt subfamily.

It localises to the cytoplasm. The catalysed reaction is N-terminal L-glutamyl-[protein] + L-leucyl-tRNA(Leu) = N-terminal L-leucyl-L-glutamyl-[protein] + tRNA(Leu) + H(+). It catalyses the reaction N-terminal L-aspartyl-[protein] + L-leucyl-tRNA(Leu) = N-terminal L-leucyl-L-aspartyl-[protein] + tRNA(Leu) + H(+). In terms of biological role, functions in the N-end rule pathway of protein degradation where it conjugates Leu from its aminoacyl-tRNA to the N-termini of proteins containing an N-terminal aspartate or glutamate. The polypeptide is Aspartate/glutamate leucyltransferase (Nitrosococcus oceani (strain ATCC 19707 / BCRC 17464 / JCM 30415 / NCIMB 11848 / C-107)).